A 72-amino-acid chain; its full sequence is uncharacterized protein (72 aa).

A compositionally biased stretch (low complexity) spans 1 to 38; sequence MSIFSSLSSLSTGSLKSSVSSIENGSSSGSFGSNETSG. The tract at residues 1–42 is disordered; the sequence is MSIFSSLSSLSTGSLKSSVSSIENGSSSGSFGSNETSGWGQH.

This is an uncharacterized protein from Dictyostelium discoideum (Social amoeba).